Here is a 450-residue protein sequence, read N- to C-terminus: Signal recognition particle protein (450 aa).

GTP-binding positions include 107 to 114, 190 to 194, and 248 to 251; these read GLQGVGKT, DTAGR, and TKTD.

It belongs to the GTP-binding SRP family. SRP54 subfamily. In terms of assembly, part of the signal recognition particle protein translocation system, which is composed of SRP and FtsY. SRP is a ribonucleoprotein composed of Ffh and a 4.5S RNA molecule.

It localises to the cytoplasm. The enzyme catalyses GTP + H2O = GDP + phosphate + H(+). Its function is as follows. Involved in targeting and insertion of nascent membrane proteins into the cytoplasmic membrane. Binds to the hydrophobic signal sequence of the ribosome-nascent chain (RNC) as it emerges from the ribosomes. The SRP-RNC complex is then targeted to the cytoplasmic membrane where it interacts with the SRP receptor FtsY. Interaction with FtsY leads to the transfer of the RNC complex to the Sec translocase for insertion into the membrane, the hydrolysis of GTP by both Ffh and FtsY, and the dissociation of the SRP-FtsY complex into the individual components. The sequence is that of Signal recognition particle protein from Buchnera aphidicola subsp. Schizaphis graminum (strain Sg).